The sequence spans 96 residues: ESAT-6-like protein EsxR (96 aa).

This sequence belongs to the WXG100 family. ESAT-6 subfamily.

The protein resides in the secreted. The protein is ESAT-6-like protein EsxR of Mycobacterium leprae (strain TN).